The primary structure comprises 156 residues: Small ribosomal subunit protein bS16 (156 aa).

Low complexity predominate over residues 124 to 135; sequence AAKAAEAETPAE. A disordered region spans residues 124–156; that stretch reads AAKAAEAETPAEVQHDDEKVELADVEESAPESV. Residues 136-145 are compositionally biased toward basic and acidic residues; the sequence is VQHDDEKVEL. Over residues 146-156 the composition is skewed to acidic residues; the sequence is ADVEESAPESV.

This sequence belongs to the bacterial ribosomal protein bS16 family.

The sequence is that of Small ribosomal subunit protein bS16 from Bifidobacterium animalis subsp. lactis (strain AD011).